Here is a 564-residue protein sequence, read N- to C-terminus: Dihydroxy-acid dehydratase (564 aa).

Residue Cys51 participates in [2Fe-2S] cluster binding. Residue Asp83 participates in Mg(2+) binding. Cys124 lines the [2Fe-2S] cluster pocket. Positions 125 and 126 each coordinate Mg(2+). Lys126 carries the N6-carboxylysine modification. Cys196 provides a ligand contact to [2Fe-2S] cluster. A Mg(2+)-binding site is contributed by Glu448. The active-site Proton acceptor is the Ser474.

This sequence belongs to the IlvD/Edd family. As to quaternary structure, homodimer. [2Fe-2S] cluster serves as cofactor. Mg(2+) is required as a cofactor.

The enzyme catalyses (2R)-2,3-dihydroxy-3-methylbutanoate = 3-methyl-2-oxobutanoate + H2O. The catalysed reaction is (2R,3R)-2,3-dihydroxy-3-methylpentanoate = (S)-3-methyl-2-oxopentanoate + H2O. The protein operates within amino-acid biosynthesis; L-isoleucine biosynthesis; L-isoleucine from 2-oxobutanoate: step 3/4. It participates in amino-acid biosynthesis; L-valine biosynthesis; L-valine from pyruvate: step 3/4. Functionally, functions in the biosynthesis of branched-chain amino acids. Catalyzes the dehydration of (2R,3R)-2,3-dihydroxy-3-methylpentanoate (2,3-dihydroxy-3-methylvalerate) into 2-oxo-3-methylpentanoate (2-oxo-3-methylvalerate) and of (2R)-2,3-dihydroxy-3-methylbutanoate (2,3-dihydroxyisovalerate) into 2-oxo-3-methylbutanoate (2-oxoisovalerate), the penultimate precursor to L-isoleucine and L-valine, respectively. This Polynucleobacter asymbioticus (strain DSM 18221 / CIP 109841 / QLW-P1DMWA-1) (Polynucleobacter necessarius subsp. asymbioticus) protein is Dihydroxy-acid dehydratase.